The following is a 1049-amino-acid chain: MSREEQIKKLNQYLDNRELAFRAKDGDKNIFHTESQLDSSLKKNTAFMKRCKSSLTSENYDSFIKEIKTLSLKKFIPEITAAIVEGMMKCKATKDILSSVKIVWALNLRFSTAFTGPMLANLYCALYPNPGYSLCHESYFELKQNENEVSEKDRSSHLLKVRPLLRFLIEFWLNGVVGTPEDFVSYLPSTDSNDKKFRKPWFEEQNLKKPLVVLLFNDLMDTRFGFLLLPVLTSLVRTFSCELFTTEDFEDKETLELVNRLNPVVWRTYLRKSLNSYVDKLEVYCQKRKSLFEELNKQYQEQSIIRADPNNEKFQRLANFSKSIESEFSSYASLSEVLNRKASEDLLELNFMEKASSGTNSVFNASGERSESANVETAQVWDDREQYFFYEVFPNFNEGSIAEMKSSIYESSQEGIRSSSENNKKEDDLKDSTGDLNTTQVSSRVDNFLLKLPSMVSLELTNEMALEFYDLNTKASRNRLIKALCTIPRTSSFLVPYYVRLARILSQLSSEFSTSLVDHARHSFKRMIHRKAKHEYDTRLLIVRYISELTKFQLMPFHMVFECYKLCINEFTPFDLEVLALLLESCGRFLLRYPETKLQMQSFLEAIQKKKLASALASQDQLVLENALHFVNPPKRGIIVSKKKSLKEEFLYDLIQIRLKDDNVFPTLLLLRKFDWKDDYQILYNTIMEVWNIKYNSLNALARLLSALYKFHPEFCIHVIDDTLESLFSAVNNSDHVEKQKRLAQARFISELCVIHMLDVRAITNFLFHLLPLEKFESFLTMKASTLTNINNDMFRLRLIVVVLQTCGPSIIRSKTKKTMLTYLLAYQCYFLIQPEMPLDMLYEFEDVIGYVRPSMKVYMHYEEARNALTERLQAISDDWEEDDTRPVFQGANDGDISSNEESVYLPEDISDESETDEESSGLEESDLLDSEDEDIDNEMQLSRELDEEFERLTNESLLTRMHEKNPGFDVPLPLRASSLGSPYVTRNEESASESSHVMFTLLTKRGNKQRSQYLEIPSHSSLVRSTKNQQTEEIMERKRVKEMVLNFE.

The 242-residue stretch at 41–282 folds into the MIF4G 1 domain; that stretch reads LKKNTAFMKR…SLNSYVDKLE (242 aa). Y60 is subject to Phosphotyrosine. Residues 412-421 show a composition bias toward polar residues; that stretch reads SQEGIRSSSE. Positions 412 to 438 are disordered; it reads SQEGIRSSSENNKKEDDLKDSTGDLNT. The segment covering 422-433 has biased composition (basic and acidic residues); the sequence is NNKKEDDLKDST. 2 consecutive MIF4G domains span residues 446–634 and 649–855; these read DNFL…VNPP and EFLY…VRPS. The interval 909–934 is disordered; it reads DISDESETDEESSGLEESDLLDSEDE.

It localises to the cytoplasm. Involved in nonsense-mediated decay of mRNAs containing premature stop codons. It interacts, via its C-terminus, with NAM7/UPF1. Could be involved in determining the efficiency of translational termination or reinitiation or factors involved in the initial assembly of an initiation- and termination-competent mRNP. The chain is Nonsense-mediated mRNA decay protein 2 (upf2) from Schizosaccharomyces pombe (strain 972 / ATCC 24843) (Fission yeast).